The primary structure comprises 263 residues: Ribosomal RNA small subunit methyltransferase J (263 aa).

Residues 115 to 116 (RD), 131 to 132 (ER), and aspartate 181 each bind S-adenosyl-L-methionine.

It belongs to the methyltransferase superfamily. RsmJ family.

The protein localises to the cytoplasm. It catalyses the reaction guanosine(1516) in 16S rRNA + S-adenosyl-L-methionine = N(2)-methylguanosine(1516) in 16S rRNA + S-adenosyl-L-homocysteine + H(+). In terms of biological role, specifically methylates the guanosine in position 1516 of 16S rRNA. This Hahella chejuensis (strain KCTC 2396) protein is Ribosomal RNA small subunit methyltransferase J.